We begin with the raw amino-acid sequence, 305 residues long: T-cell immunoglobulin and mucin domain-containing protein 2 (305 aa).

Positions methionine 1 to serine 21 are cleaved as a signal peptide. Residues histidine 22–glutamate 125 form the Ig-like V-type domain. Topologically, residues histidine 22 to glycine 231 are extracellular. Cystine bridges form between cysteine 37–cysteine 109, cysteine 50–cysteine 61, and cysteine 56–cysteine 108. Asparagine 86 and asparagine 91 each carry an N-linked (GlcNAc...) asparagine glycan. The segment at isoleucine 130–tyrosine 174 is disordered. Positions serine 131 to threonine 167 are enriched in low complexity. The helical transmembrane segment at phenylalanine 232–isoleucine 252 threads the bilayer. Residues threonine 253–serine 305 are Cytoplasmic-facing.

The protein belongs to the immunoglobulin superfamily. TIM family. In terms of assembly, homodimer. Expressed on late differentiated Th2 cells. Expressed also on all splenic B-cells, with increased levels on germinal center B-cells, in the liver, especially in bile duct epithelial cells, and in renal tubule cells. Within retina, mainly expressed in Mueller cells.

Its subcellular location is the cell membrane. In terms of biological role, cell surface glycoprotein that participates in iron homeostasis in the liver, the kidney, the retina and oligodendrocytes by acting as a receptor of H-ferritin. Mechanistically, mediates iron-containing ferritin uptake via an endocytic pathway, trafficking to endosomes and subsequently to lysosomes. Plays also an important role in the regulation of Th2 immunity. Receptor for SEMA4A involved in the regulation of T-cell function, enhancing T-cell activation. The polypeptide is T-cell immunoglobulin and mucin domain-containing protein 2 (Timd2) (Mus musculus (Mouse)).